We begin with the raw amino-acid sequence, 154 residues long: Superoxide dismutase [Cu-Zn] (154 aa).

Cu cation-binding residues include histidine 47 and histidine 64. The cysteines at positions 58 and 147 are disulfide-linked. 4 residues coordinate Zn(2+): histidine 64, histidine 72, histidine 81, and aspartate 84. Histidine 121 lines the Cu cation pocket. Arginine 144 serves as a coordination point for substrate.

Belongs to the Cu-Zn superoxide dismutase family. In terms of assembly, homodimer. It depends on Cu cation as a cofactor. The cofactor is Zn(2+).

Its subcellular location is the cytoplasm. It carries out the reaction 2 superoxide + 2 H(+) = H2O2 + O2. Its function is as follows. Destroys radicals which are normally produced within the cells and which are toxic to biological systems. In Pleurocordyceps sinensis (Polycephalomyces sinensis), this protein is Superoxide dismutase [Cu-Zn] (SOD1).